The chain runs to 288 residues: Peroxisomal protein PEX21 (288 aa).

Residue Cys-5 forms a Glycyl cysteine thioester (Cys-Gly) (interchain with G-Cter in ubiquitin) linkage.

The protein belongs to the peroxin-21 family. Interacts with PEX7. Interacts with PEX13. Interacts with SES1. In terms of processing, monoubiquitinated at Cys-5; acts as a signal for PEX21 extraction and is required for proper export from peroxisomes and recycling.

It localises to the cytoplasm. The protein localises to the cytosol. Its subcellular location is the peroxisome. Functionally, receptor that mediates peroxisomal import of proteins containing a C-terminal PTS2-type peroxisomal targeting signal via its interaction with PEX7. Interaction with PEX7 only takes place when PEX7 is associated with cargo proteins containing a PTS2 peroxisomal targeting signal. PEX7 along with PTS2-containing cargo proteins are then translocated through the PEX13-PEX14 docking complex together with PEX21. Acts as an activator of the seryl-tRNA synthetase SES1 by increasing its binding to tRNA. The protein is Peroxisomal protein PEX21 (PEX21) of Saccharomyces cerevisiae (strain ATCC 204508 / S288c) (Baker's yeast).